Here is a 140-residue protein sequence, read N- to C-terminus: MLYLYLAVGGFCGAVGRYFLASFINRLWPGSFPLATWIINLGGCLAMGFILTYTLERLVMGPELRLGLTTGMLGAFTTFSTFSVETLHLLQGEKIPLALLYLFASLAGGLICMQTGIFLARLPLSSKALSSIITREDGEE.

A run of 4 helical transmembrane segments spans residues 4–24 (LYLA…ASFI), 32–52 (FPLA…FILT), 70–90 (TGML…LHLL), and 99–119 (LLYL…GIFL). Residues glycine 74 and threonine 77 each contribute to the Na(+) site.

Belongs to the fluoride channel Fluc/FEX (TC 1.A.43) family.

Its subcellular location is the cell membrane. It carries out the reaction fluoride(in) = fluoride(out). With respect to regulation, na(+) is not transported, but it plays an essential structural role and its presence is essential for fluoride channel function. Fluoride-specific ion channel. Important for reducing fluoride concentration in the cell, thus reducing its toxicity. This chain is Fluoride-specific ion channel FluC 1, found in Moorella thermoacetica (strain ATCC 39073 / JCM 9320).